Here is a 184-residue protein sequence, read N- to C-terminus: Glutathione-regulated potassium-efflux system ancillary protein KefG (184 aa).

This sequence belongs to the NAD(P)H dehydrogenase (quinone) family. KefG subfamily. Interacts with KefB.

The protein resides in the cell inner membrane. It carries out the reaction a quinone + NADH + H(+) = a quinol + NAD(+). It catalyses the reaction a quinone + NADPH + H(+) = a quinol + NADP(+). Functionally, regulatory subunit of a potassium efflux system that confers protection against electrophiles. Required for full activity of KefB. The polypeptide is Glutathione-regulated potassium-efflux system ancillary protein KefG (Shigella dysenteriae serotype 1 (strain Sd197)).